The chain runs to 952 residues: Inactive atromentin synthetase invA6 (952 aa).

The interval 58 to 462 (DSSVQTRSFS…NGRIKDTVIV (405 aa)) is adenylation (A) domain. The Carrier domain maps to 594 to 672 (APSTETEKTL…SLAKYVDSLV (79 aa)). The interval 599–669 (TEKTLGRLYA…VISSLAKYVD (71 aa)) is thiolation and peptide carrier (T) domain. An O-(pantetheine 4'-phosphoryl)serine modification is found at Ser631. The segment at 695–939 (PIFMVHPGIG…LMDFDHVSGF (245 aa)) is thioesterase (TE) domain.

It belongs to the ATP-dependent AMP-binding enzyme family.

Functionally, inactive atromentin synthetase homolog. Does not accept 4-hydroxyphenylpyruvate (4-HPP) as substrate. Both the adenylation (A) and the thioesterase (TE) domain of the invA6 enzyme are inactive. The chain is Inactive atromentin synthetase invA6 (invA6) from Paxillus involutus (Naked brimcap).